A 276-amino-acid polypeptide reads, in one-letter code: Nickel import system permease protein NikC (276 aa).

5 helical membrane passes run 10–30 (LIFF…FFVS), 73–93 (LFVT…LGLF), 108–128 (FIDV…ASFF), 186–206 (IIPA…LYIS), and 238–258 (IMLI…NLTG). The 190-residue stretch at 69 to 258 (ARSTLFVTVL…ITILIFNLTG (190 aa)) folds into the ABC transmembrane type-1 domain.

It belongs to the binding-protein-dependent transport system permease family. OppBC subfamily. As to quaternary structure, the complex is composed of two ATP-binding proteins (NikD and NikE), two transmembrane proteins (NikB and NikC) and a solute-binding protein (NikA).

Its subcellular location is the cell membrane. Part of the ABC transporter complex NikABCDE (Opp2) involved in nickel import. Probably responsible for the translocation of the substrate across the membrane. The chain is Nickel import system permease protein NikC from Staphylococcus aureus (strain Mu50 / ATCC 700699).